The primary structure comprises 1040 residues: Activated CDC42 kinase 1 (1040 aa).

Residues 1–110 form an SAM-like domain region; sequence MQPEEGTGWL…PSPTPGGLAG (110 aa). Positions 86–109 are disordered; the sequence is EAEFPSHHSQSTFRKPSPTPGGLA. Position 113 is a phosphothreonine (Thr-113). In terms of domain architecture, Protein kinase spans 126–385; the sequence is LRLLEKLGDG…PTFVALRDFL (260 aa). ATP-binding positions include 132–140 and Lys-158; that span reads LGDGSFGVV. Catalysis depends on Asp-252, which acts as the Proton acceptor. Tyr-284 carries the post-translational modification Phosphotyrosine; by SRC and autocatalysis. The SH3 domain occupies 388 to 448; that stretch reads AQPTDMRALQ…PRNVVTSVAG (61 aa). Residues 505–527 are disordered; the sequence is RPTQHLGRMKKPTYDPVSEDPDP. The residue at position 518 (Tyr-518) is a Phosphotyrosine. The interval 623 to 652 is required for interaction with SRC; sequence DWDARPLPPPPAYDDVAQDEDDFEVCSINS. Residues 632 to 635 are required for interaction with NEDD4; the sequence is PPAY. The interval 722 to 824 is disordered; that stretch reads TGQLTPSPTP…MPTTQSFASD (103 aa). The segment at 733–876 is EBD domain; it reads GDDKPQVPPR…PYLERYQRFL (144 aa). 2 stretches are compositionally biased toward pro residues: residues 738–749 and 772–783; these read QVPPRVPIPPRP and PSSPPRVPPREP. A compositionally biased stretch (low complexity) spans 802-812; sequence PLPHRLSSSPG. Residue Tyr-827 is modified to Phosphotyrosine. Arg-839 is subject to Omega-N-methylarginine. Phosphotyrosine occurs at positions 859 and 872. Position 881 is a phosphoserine (Ser-881). The tract at residues 881–957 is disordered; the sequence is SPEEPAALPV…CPGDGQEAAR (77 aa). Over residues 888 to 903 the composition is skewed to pro residues; sequence LPVPPLLPPPSTPAPA. Residues 922–931 are compositionally biased toward polar residues; it reads NFSTNNSNPG. The UBA domain maps to 958–998; that stretch reads PADKVQMLQAMVHGVTTEECQAALRSHSWSIQRAAQYLKVE.

It belongs to the protein kinase superfamily. Tyr protein kinase family. Homodimer. Interacts with CDC42. Interacts with CSPG4 (activated). Interacts with MERTK (activated); stimulates autophosphorylation. May interact (phosphorylated) with HSP90AB1; maintains kinase activity. Interacts with NPHP1. Interacts with SNX9 (via SH3 domain). Interacts with SRC (via SH2 and SH3 domain). Interacts with EGFR, and this interaction is dependent on EGF stimulation and kinase activity of EGFR. Interacts (via kinase domain) with AKT1. Part of a collagen stimulated complex involved in cell migration composed of CDC42, CRK, TNK2 and BCAR1/p130cas. Interacts with BCAR1/p130cas via SH3 domains. Forms complexes with GRB2 and numerous receptor tyrosine kinases (RTK) including LTK, AXL or PDGFRL, in which GRB2 promotes RTK recruitment by TNK2. Interacts with NEDD4 (via WW3 domain). NEDD4L and EGF promote association with NEDD4. It depends on Mg(2+) as a cofactor. Post-translationally, autophosphorylation regulates kinase activity. Phosphorylation on Tyr-518 is required for interaction with SRC and is observed during association with clathrin-coated pits. In terms of processing, polyubiquitinated by NEDD4 and NEDD4L. Degradation can be induced by EGF and is lysosome-dependent.

It localises to the cell membrane. It is found in the nucleus. The protein resides in the endosome. Its subcellular location is the cell junction. The protein localises to the adherens junction. It localises to the cytoplasmic vesicle membrane. It is found in the cytoplasmic vesicle. The protein resides in the clathrin-coated vesicle. Its subcellular location is the membrane. The protein localises to the clathrin-coated pit. It localises to the cytoplasm. It is found in the cytosol. It carries out the reaction L-tyrosyl-[protein] + ATP = O-phospho-L-tyrosyl-[protein] + ADP + H(+). The catalysed reaction is L-seryl-[protein] + ATP = O-phospho-L-seryl-[protein] + ADP + H(+). The enzyme catalyses L-threonyl-[protein] + ATP = O-phospho-L-threonyl-[protein] + ADP + H(+). Functionally, non-receptor tyrosine-protein and serine/threonine-protein kinase that is implicated in cell spreading and migration, cell survival, cell growth and proliferation. Transduces extracellular signals to cytosolic and nuclear effectors. Phosphorylates AKT1, AR, MCF2, WASL and WWOX. Implicated in trafficking and clathrin-mediated endocytosis through binding to epidermal growth factor receptor (EGFR) and clathrin. Binds to both poly- and mono-ubiquitin and regulates ligand-induced degradation of EGFR, thereby contributing to the accumulation of EGFR at the limiting membrane of early endosomes. Downstream effector of CDC42 which mediates CDC42-dependent cell migration via phosphorylation of BCAR1. May be involved both in adult synaptic function and plasticity and in brain development. Activates AKT1 by phosphorylating it on 'Tyr-176'. Phosphorylates AR on 'Tyr-267' and 'Tyr-363', thereby promoting its recruitment to androgen-responsive enhancers (AREs). Phosphorylates WWOX on 'Tyr-287'. Phosphorylates MCF2, thereby enhancing its activity as a guanine nucleotide exchange factor (GEF) toward Rho family proteins. Contributes to the control of AXL receptor levels. Confers metastatic properties on cancer cells and promotes tumor growth by negatively regulating tumor suppressor such as WWOX and positively regulating pro-survival factors such as AKT1 and AR. The polypeptide is Activated CDC42 kinase 1 (Rattus norvegicus (Rat)).